The primary structure comprises 278 residues: Elongation factor Ts (278 aa).

The involved in Mg(2+) ion dislocation from EF-Tu stretch occupies residues 82–85 (TDFV).

This sequence belongs to the EF-Ts family.

The protein localises to the cytoplasm. Its function is as follows. Associates with the EF-Tu.GDP complex and induces the exchange of GDP to GTP. It remains bound to the aminoacyl-tRNA.EF-Tu.GTP complex up to the GTP hydrolysis stage on the ribosome. In Streptomyces ramocissimus, this protein is Elongation factor Ts (tsf).